The sequence spans 250 residues: MELGHVLSEGKTKIVYAHPTDPDLAILFHKDGITAGDGARRHVIAGKGALAGQTTANVFRFLNRAGIATHFIEAPEPKLTVVRRCVMIPLEVVMRRLPAGSYLRRYPEAAGQRFDPPLVEFFLKDDARHDPQITPDEIVAQGIATPAEVEQMTMTGQQVFTTLEAAWAKLDVTLVDLKIEFGRAGDGSLLVADVIDNDSWRIWPGGDPNRMLDKQVYRNAQVVDEDVLADVYARYAQVAELTGRWDAVTK.

Belongs to the SAICAR synthetase family.

The catalysed reaction is 5-amino-1-(5-phospho-D-ribosyl)imidazole-4-carboxylate + L-aspartate + ATP = (2S)-2-[5-amino-1-(5-phospho-beta-D-ribosyl)imidazole-4-carboxamido]succinate + ADP + phosphate + 2 H(+). It participates in purine metabolism; IMP biosynthesis via de novo pathway; 5-amino-1-(5-phospho-D-ribosyl)imidazole-4-carboxamide from 5-amino-1-(5-phospho-D-ribosyl)imidazole-4-carboxylate: step 1/2. The polypeptide is Phosphoribosylaminoimidazole-succinocarboxamide synthase (Chloroflexus aggregans (strain MD-66 / DSM 9485)).